The following is a 388-amino-acid chain: Succinate--CoA ligase [ADP-forming] subunit beta (388 aa).

Residues 9 to 244 (KEILRKFGVA…LDEEDPAEIE (236 aa)) enclose the ATP-grasp domain. Residues lysine 46, 53-55 (GRG), glutamate 99, alanine 102, and glutamate 107 each bind ATP. Mg(2+) contacts are provided by asparagine 199 and aspartate 213. Substrate-binding positions include asparagine 264 and 321-323 (GIM).

It belongs to the succinate/malate CoA ligase beta subunit family. Heterotetramer of two alpha and two beta subunits. It depends on Mg(2+) as a cofactor.

It carries out the reaction succinate + ATP + CoA = succinyl-CoA + ADP + phosphate. The catalysed reaction is GTP + succinate + CoA = succinyl-CoA + GDP + phosphate. Its pathway is carbohydrate metabolism; tricarboxylic acid cycle; succinate from succinyl-CoA (ligase route): step 1/1. Functionally, succinyl-CoA synthetase functions in the citric acid cycle (TCA), coupling the hydrolysis of succinyl-CoA to the synthesis of either ATP or GTP and thus represents the only step of substrate-level phosphorylation in the TCA. The beta subunit provides nucleotide specificity of the enzyme and binds the substrate succinate, while the binding sites for coenzyme A and phosphate are found in the alpha subunit. This Burkholderia cenocepacia (strain HI2424) protein is Succinate--CoA ligase [ADP-forming] subunit beta.